Consider the following 100-residue polypeptide: Urease subunit gamma (100 aa).

This sequence belongs to the urease gamma subunit family. As to quaternary structure, heterotrimer of UreA (gamma), UreB (beta) and UreC (alpha) subunits. Three heterotrimers associate to form the active enzyme.

The protein resides in the cytoplasm. It catalyses the reaction urea + 2 H2O + H(+) = hydrogencarbonate + 2 NH4(+). The protein operates within nitrogen metabolism; urea degradation; CO(2) and NH(3) from urea (urease route): step 1/1. This chain is Urease subunit gamma, found in Edwardsiella ictaluri (strain 93-146).